The following is a 363-amino-acid chain: G-protein coupled receptor 6 (363 aa).

Over 1–75 (MNASAAALNE…SGLLLSAVNP (75 aa)) the chain is Extracellular. 2 N-linked (GlcNAc...) asparagine glycosylation sites follow: Asn-2 and Asn-9. The disordered stretch occupies residues 29 to 48 (GAPDTGEWGPPAASAALGGG). Asn-52 is a glycosylation site (N-linked (GlcNAc...) asparagine). Residues 76 to 95 (WDVLLCVSGTVIAGENALVV) traverse the membrane as a helical segment. Over 96-107 (ALIASTPALRTP) the chain is Cytoplasmic. A helical membrane pass occupies residues 108-131 (MFVLVGSLATADLLAGCGLILHFV). At 132–143 (FQYVVPSETVSL) the chain is on the extracellular side. The chain crosses the membrane as a helical span at residues 144 to 165 (LMVGFLVASFAASVSSLLAITV). The Cytoplasmic segment spans residues 166–186 (DRYLSLYNALTYYSRRTLLGV). Residues 187 to 206 (HLLLAATWTVSLGLGLLPVL) traverse the membrane as a helical segment. Over 207 to 231 (GWNCLADRTSCSVVRPLTRSHVALL) the chain is Extracellular. A helical transmembrane segment spans residues 232–250 (STSFFVVFGIMLHLYVRIC). Residues 251-278 (QVVWRHAHQIALQQHCLAPPHLAATRKG) are Cytoplasmic-facing. The chain crosses the membrane as a helical span at residues 279 to 305 (VGTLAVVLGTFGASWLPFAIYCVVGSQ). Residues 306–310 (EDPAI) are Extracellular-facing. Residues 311 to 332 (YTYATLLPATYNSMINPIIYAF) form a helical membrane-spanning segment. Residues 333 to 363 (RNQEIQRALWLLFCGCFQSKVPFRSRSPSEV) lie on the Cytoplasmic side of the membrane. Cys-346 carries S-palmitoyl cysteine lipidation. Phosphoserine is present on residues Ser-357, Ser-359, and Ser-361.

Belongs to the G-protein coupled receptor 1 family. In terms of tissue distribution, mainly expressed in the brain. Selectively expressed in striatopallidal neurons in the striatum.

The protein resides in the cell membrane. Its function is as follows. Orphan receptor with constitutive G(s) signaling activity that activate cyclic AMP. Promotes neurite outgrowth and blocks myelin inhibition in neurons. The polypeptide is G-protein coupled receptor 6 (Gpr6) (Mus musculus (Mouse)).